Here is a 149-residue protein sequence, read N- to C-terminus: Transcriptional repressor NrdR (149 aa).

A zinc finger lies at 3-34; sequence CPFCSHQETQVVETRVSEDGDFIRRRRQCGAC. Residues 49–139 form the ATP-cone domain; sequence PTVVKKDGRR…VYRSFEDIDE (91 aa).

This sequence belongs to the NrdR family. It depends on Zn(2+) as a cofactor.

Its function is as follows. Negatively regulates transcription of bacterial ribonucleotide reductase nrd genes and operons by binding to NrdR-boxes. This chain is Transcriptional repressor NrdR, found in Acidovorax sp. (strain JS42).